Reading from the N-terminus, the 158-residue chain is MYYHIIKSPIYPILLAGDEKGLKHLIFLKDERKAKIPNDWVENKDFFREVSNQLEAYFSGKLKTFDVKLAPQGTEFQKSVWKALCEIPCGETRTYGEIAKRIQNPKAYRAVGLANNRNPIAIIVPCHRVIGANGKLTGYASGLDIKEFLLKLEENNLK.

Residue Cys-126 is the Nucleophile; methyl group acceptor of the active site.

It belongs to the MGMT family.

It localises to the cytoplasm. The catalysed reaction is a 6-O-methyl-2'-deoxyguanosine in DNA + L-cysteinyl-[protein] = S-methyl-L-cysteinyl-[protein] + a 2'-deoxyguanosine in DNA. It carries out the reaction a 4-O-methyl-thymidine in DNA + L-cysteinyl-[protein] = a thymidine in DNA + S-methyl-L-cysteinyl-[protein]. Involved in the cellular defense against the biological effects of O6-methylguanine (O6-MeG) and O4-methylthymine (O4-MeT) in DNA. Repairs the methylated nucleobase in DNA by stoichiometrically transferring the methyl group to a cysteine residue in the enzyme. This is a suicide reaction: the enzyme is irreversibly inactivated. The chain is Methylated-DNA--protein-cysteine methyltransferase from Methanosarcina mazei (strain ATCC BAA-159 / DSM 3647 / Goe1 / Go1 / JCM 11833 / OCM 88) (Methanosarcina frisia).